The chain runs to 460 residues: Argininosuccinate lyase (460 aa).

The protein belongs to the lyase 1 family. Argininosuccinate lyase subfamily.

It is found in the cytoplasm. It carries out the reaction 2-(N(omega)-L-arginino)succinate = fumarate + L-arginine. It functions in the pathway amino-acid biosynthesis; L-arginine biosynthesis; L-arginine from L-ornithine and carbamoyl phosphate: step 3/3. The chain is Argininosuccinate lyase from Prosthecochloris aestuarii (strain DSM 271 / SK 413).